The sequence spans 345 residues: Anthranilate phosphoribosyltransferase (345 aa).

Residues Gly88, 91–92 (GD), Thr96, 98–101 (NIST), 116–124 (KHGNRSASG), and Ser128 contribute to the 5-phospho-alpha-D-ribose 1-diphosphate site. Anthranilate is bound at residue Gly88. Ser100 contributes to the Mg(2+) binding site. An anthranilate-binding site is contributed by Asn119. Arg174 provides a ligand contact to anthranilate. Mg(2+)-binding residues include Asp233 and Glu234.

It belongs to the anthranilate phosphoribosyltransferase family. As to quaternary structure, homodimer. Mg(2+) is required as a cofactor.

It catalyses the reaction N-(5-phospho-beta-D-ribosyl)anthranilate + diphosphate = 5-phospho-alpha-D-ribose 1-diphosphate + anthranilate. Its pathway is amino-acid biosynthesis; L-tryptophan biosynthesis; L-tryptophan from chorismate: step 2/5. Catalyzes the transfer of the phosphoribosyl group of 5-phosphorylribose-1-pyrophosphate (PRPP) to anthranilate to yield N-(5'-phosphoribosyl)-anthranilate (PRA). The sequence is that of Anthranilate phosphoribosyltransferase from Prochlorococcus marinus (strain NATL1A).